The chain runs to 254 residues: uncharacterized protein (254 aa).

Positions 7 and 85 each coordinate NADP(+). S136 (proton donor) is an active-site residue. NADP(+)-binding residues include Y150, K154, V181, and T183. Residue Y150 is the Proton acceptor of the active site. K154 serves as the catalytic Lowers pKa of active site Tyr.

The protein belongs to the short-chain dehydrogenases/reductases (SDR) family.

This is an uncharacterized protein from Saccharomyces cerevisiae (strain ATCC 204508 / S288c) (Baker's yeast).